A 400-amino-acid polypeptide reads, in one-letter code: uncharacterized protein (400 aa).

A signal peptide spans 1–23 (MSRKLLLALTFLVVLGIAVVVMA).

This is an uncharacterized protein from Archaeoglobus fulgidus (strain ATCC 49558 / DSM 4304 / JCM 9628 / NBRC 100126 / VC-16).